The sequence spans 251 residues: Aliphatic sulfonates import ATP-binding protein SsuB (251 aa).

The ABC transporter domain occupies 3–231 (VSINEVSKYF…PRNKTSQSFQ (229 aa)). 39-46 (GPSGCGKS) provides a ligand contact to ATP.

Belongs to the ABC transporter superfamily. Aliphatic sulfonates importer (TC 3.A.1.17.2) family. As to quaternary structure, the complex is composed of two ATP-binding proteins (SsuB), two transmembrane proteins (SsuC) and a solute-binding protein (SsuA).

The protein resides in the cell membrane. It catalyses the reaction ATP + H2O + aliphatic sulfonate-[sulfonate-binding protein]Side 1 = ADP + phosphate + aliphatic sulfonateSide 2 + [sulfonate-binding protein]Side 1.. Functionally, part of the ABC transporter complex SsuABC involved in aliphatic sulfonates import. Responsible for energy coupling to the transport system. The chain is Aliphatic sulfonates import ATP-binding protein SsuB from Bacillus anthracis.